The primary structure comprises 202 residues: Cold-regulated 413 plasma membrane protein 4 (202 aa).

The Extracellular segment spans residues 1 to 42 (MGRGEFLAMKTEENAANLINSDMNEFVAAAKKLVKDVGMLGG). Residues 43 to 63 (VGFGTSVLQWAASIFAIYLLI) form a helical membrane-spanning segment. The Cytoplasmic segment spans residues 64–72 (LDRTNWKTK). A helical membrane pass occupies residues 73–93 (MLTTLLVPYIFFTLPSVIFQF). Over 94–97 (FSGD) the chain is Extracellular. The chain crosses the membrane as a helical span at residues 98-118 (FGKWIALIAIIVRLFFPKEFP). Glu-119 is a topological domain (cytoplasmic). Residues 120–140 (WLEIPVALILIVVVSPSLIAW) traverse the membrane as a helical segment. The Extracellular portion of the chain corresponds to 141 to 145 (TLRES). A helical membrane pass occupies residues 146-166 (WVGAVICLVIACYLFHEHIKA). The Cytoplasmic portion of the chain corresponds to 167-181 (SGGFKNSFTQKNGIS). The chain crosses the membrane as a helical span at residues 182 to 202 (NTIGIVALLVYPVWTIFFHIF).

It belongs to the Cold-regulated 413 protein family.

Its subcellular location is the cell membrane. The sequence is that of Cold-regulated 413 plasma membrane protein 4 from Arabidopsis thaliana (Mouse-ear cress).